Reading from the N-terminus, the 607-residue chain is UvrABC system protein C (607 aa).

Residues 11 to 89 (CKPGVYRFED…IKEFAPPCNV (79 aa)) form the GIY-YIG domain. In terms of domain architecture, UVR spans 201-236 (SSLLESLKKKMLKASKNKEYEEAAILRDKIQAAQTV).

The protein belongs to the UvrC family. Interacts with UvrB in an incision complex.

It localises to the cytoplasm. The UvrABC repair system catalyzes the recognition and processing of DNA lesions. UvrC both incises the 5' and 3' sides of the lesion. The N-terminal half is responsible for the 3' incision and the C-terminal half is responsible for the 5' incision. The sequence is that of UvrABC system protein C from Tropheryma whipplei (strain TW08/27) (Whipple's bacillus).